We begin with the raw amino-acid sequence, 517 residues long: Lysophosphatidylcholine acyltransferase 1 (517 aa).

At 1-52 (MRFPNRKLHTAVNGGDSGVSTHFRNPFVHELRFTTLQKLKIAVMTVTLFPVR) the chain is on the cytoplasmic side. Residues 53–73 (LLFAAFMMLLAWPFAFVATVG) form a helical; Signal-anchor for type II membrane protein membrane-spanning segment. The Lumenal portion of the chain corresponds to 74–517 (RSENAVEPLS…SPRNHSKKQD (444 aa)). Residues 129-134 (HSSYFD) carry the HXXXXD motif motif. The N-linked (GlcNAc...) asparagine glycan is linked to Asn-207. In terms of domain architecture, EF-hand spans 443–478 (VGDLAVSELFRAIDSQDKGKITFDELCSFMEKCPDL). An N-linked (GlcNAc...) asparagine glycan is attached at Asn-511. Positions 514–517 (KKQD) match the Di-lysine motif motif.

The protein belongs to the 1-acyl-sn-glycerol-3-phosphate acyltransferase family.

The protein localises to the endoplasmic reticulum membrane. It is found in the golgi apparatus membrane. It localises to the cell membrane. Its subcellular location is the lipid droplet. It catalyses the reaction a 1-acyl-sn-glycero-3-phosphocholine + an acyl-CoA = a 1,2-diacyl-sn-glycero-3-phosphocholine + CoA. The catalysed reaction is a 1-O-alkyl-sn-glycero-3-phosphocholine + acetyl-CoA = a 1-O-alkyl-2-acetyl-sn-glycero-3-phosphocholine + CoA. The enzyme catalyses a 1-acyl-sn-glycero-3-phosphate + an acyl-CoA = a 1,2-diacyl-sn-glycero-3-phosphate + CoA. It carries out the reaction a 1-O-(1Z-alkenyl)-sn-glycero-3-phosphocholine + an acyl-CoA = a 1-O-(1Z-alkenyl)-2-acyl-sn-glycero-3-phosphocholine + CoA. It catalyses the reaction 1-acyl-sn-glycero-3-phospho-(1'-sn-glycerol) + an acyl-CoA = a 1,2-diacyl-sn-glycero-3-phospho-(1'-sn-glycerol) + CoA. The catalysed reaction is 1-hexadecanoyl-sn-glycero-3-phosphocholine + hexadecanoyl-CoA = 1,2-dihexadecanoyl-sn-glycero-3-phosphocholine + CoA. The enzyme catalyses 1-O-hexadecyl-sn-glycero-3-phosphocholine + hexadecanoyl-CoA = 1-O-hexadecyl-2-hexadecanoyl-sn-glycero-3-phosphocholine + CoA. It carries out the reaction a 1-O-(1Z-alkenyl)-sn-glycero-3-phosphocholine + hexadecanoyl-CoA = 1-O-(1Z)-alkenyl-2-hexadecanoyl-sn-glycero-3-phosphocholine + CoA. It catalyses the reaction 1-hexadecanoyl-sn-glycero-3-phospho-(1'-sn-glycerol) + hexadecanoyl-CoA = 1,2-dihexadecanoyl-sn-glycero-3-phospho-(1'-sn-glycerol) + CoA. The catalysed reaction is 1-dodecanoyl-sn-glycero-3-phosphocholine + hexadecanoyl-CoA = 1-dodecanoyl-2-hexadecanoyl-sn-glycero-3-phosphocholine + CoA. The enzyme catalyses 1-tetradecanoyl-sn-glycero-3-phosphocholine + hexadecanoyl-CoA = 1-tetradecanoyl-2-hexadecanoyl-sn-glycero-3-phosphocholine + CoA. It carries out the reaction 1-O-octadecyl-sn-glycero-3-phosphocholine + hexadecanoyl-CoA = 1-O-octadecyl-2-hexadecanoyl-sn-glycero-3-phosphocholine + CoA. It catalyses the reaction 1-octadecanoyl-sn-glycero-3-phosphocholine + hexadecanoyl-CoA = 1-octadecanoyl-2-hexadecanoyl-sn-glycero-3-phosphocholine + CoA. The catalysed reaction is 1-(9Z-octadecenoyl)-sn-glycero-3-phosphocholine + hexadecanoyl-CoA = 1-(9Z-octadecenoyl)-2-hexadecanoyl-sn-glycero-3-phosphocholine + CoA. The enzyme catalyses 1-eicosanoyl-sn-glycero-3-phosphocholine + hexadecanoyl-CoA = 1-eicosanoyl-2-hexadecanoyl-sn-glycero-3-phosphocholine + CoA. It carries out the reaction hexanoyl-CoA + 1-hexadecanoyl-sn-glycero-3-phosphocholine = 1-hexadecanoyl-2-hexanoyl-sn-glycero-3-phosphocholine + CoA. It catalyses the reaction octanoyl-CoA + 1-hexadecanoyl-sn-glycero-3-phosphocholine = 1-hexadecanoyl-2-octanoyl-sn-glycero-3-phosphocholine + CoA. The catalysed reaction is decanoyl-CoA + 1-hexadecanoyl-sn-glycero-3-phosphocholine = 1-hexadecanoyl-2-decanoyl-sn-glycero-3-phosphocholine + CoA. The enzyme catalyses dodecanoyl-CoA + 1-hexadecanoyl-sn-glycero-3-phosphocholine = 1-hexadecanoyl-2-dodecanoyl-sn-glycero-3-phosphocholine + CoA. It carries out the reaction tetradecanoyl-CoA + 1-hexadecanoyl-sn-glycero-3-phosphocholine = 1-hexadecanoyl-2-tetradecanoyl-sn-glycero-3-phosphocholine + CoA. It catalyses the reaction 1-hexadecanoyl-sn-glycero-3-phosphocholine + (9Z)-octadecenoyl-CoA = 1-hexadecanoyl-2-(9Z-octadecenoyl)-sn-glycero-3-phosphocholine + CoA. The catalysed reaction is (9Z,12Z)-octadecadienoyl-CoA + 1-hexadecanoyl-sn-glycero-3-phosphocholine = 1-hexadecanoyl-2-(9Z,12Z-octadecadienoyl)-sn-glycero-3-phosphocholine + CoA. The enzyme catalyses (4Z,7Z,10Z,13Z,16Z,19Z)-docosahexaenoyl-CoA + 1-hexadecanoyl-sn-glycero-3-phosphocholine = 1-hexadecanoyl-2-(4Z,7Z,10Z,13Z,16Z,19Z-docosahexaenoyl)-sn-glycero-3-phosphocholine + CoA. It carries out the reaction 1-hexadecanoyl-sn-glycero-3-phosphocholine + acetyl-CoA = 1-hexadecanoyl-2-acetyl-sn-glycero-3-phosphocholine + CoA. It catalyses the reaction eicosanoyl-CoA + 1-hexadecanoyl-sn-glycero-3-phosphocholine = 1-hexadecanoyl-2-eicosanoyl-sn-glycero-3-phosphocholine + CoA. The catalysed reaction is 1-O-hexadecyl-sn-glycero-3-phosphocholine + acetyl-CoA = 1-O-hexadecyl-2-acetyl-sn-glycero-3-phosphocholine + CoA. The enzyme catalyses a 1-acyl-sn-glycero-3-phosphocholine + hexadecanoyl-CoA = 1-acyl-2-hexadecanoyl-sn-glycero-3-phosphocholine + CoA. It carries out the reaction a 1-acyl-sn-glycero-3-phosphate + hexadecanoyl-CoA = 1-acyl-2-hexadecanoyl-sn-glycero-3-phosphate + CoA. It catalyses the reaction 1-acyl-sn-glycero-3-phospho-(1'-sn-glycerol) + hexadecanoyl-CoA = 1-acyl-2-hexadecanoyl-sn-glycero-3-phospho-(1'-sn-glycerol) + CoA. Its pathway is lipid metabolism; phospholipid metabolism. Functionally, exhibits both acyltransferase and acetyltransferase activities. Activity is calcium-independent. Catalyzes the conversion of lysophosphatidylcholine (1-acyl-sn-glycero-3-phosphocholine or LPC) into phosphatidylcholine (1,2-diacyl-sn-glycero-3-phosphocholine or PC). Catalyzes the conversion 1-acyl-sn-glycerol-3-phosphate (lysophosphatidic acid or LPA) into 1,2-diacyl-sn-glycerol-3-phosphate (phosphatidic acid or PA) by incorporating an acyl moiety at the sn-2 position of the glycerol backbone. The chain is Lysophosphatidylcholine acyltransferase 1 (lpcat1) from Danio rerio (Zebrafish).